Consider the following 660-residue polypeptide: DNA ligase (660 aa).

Residues 33–37, 82–83, and glutamate 110 contribute to the NAD(+) site; these read DFVYD and SL. Lysine 112 serves as the catalytic N6-AMP-lysine intermediate. NAD(+)-binding residues include arginine 133, glutamate 167, lysine 281, and lysine 305. The Zn(2+) site is built by cysteine 396, cysteine 399, cysteine 412, and cysteine 417. The BRCT domain maps to 583-660; the sequence is DENRLLAGKK…SFEDIKSYLN (78 aa).

This sequence belongs to the NAD-dependent DNA ligase family. LigA subfamily. Mg(2+) is required as a cofactor. Mn(2+) serves as cofactor.

It carries out the reaction NAD(+) + (deoxyribonucleotide)n-3'-hydroxyl + 5'-phospho-(deoxyribonucleotide)m = (deoxyribonucleotide)n+m + AMP + beta-nicotinamide D-nucleotide.. Its function is as follows. DNA ligase that catalyzes the formation of phosphodiester linkages between 5'-phosphoryl and 3'-hydroxyl groups in double-stranded DNA using NAD as a coenzyme and as the energy source for the reaction. It is essential for DNA replication and repair of damaged DNA. The polypeptide is DNA ligase (Borrelia garinii subsp. bavariensis (strain ATCC BAA-2496 / DSM 23469 / PBi) (Borreliella bavariensis)).